The sequence spans 232 residues: Aprataxin-like protein (232 aa).

An HIT domain is found at 38–160 (LKVYIESPES…MTLDHVSPSL (123 aa)). 3 interaction with DNA regions span residues 63 to 67 (DMFPK), 138 to 149 (HAGPSMNNLHLH), and 161 to 165 (KNSAH). Histidine 147 acts as the Nucleophile in catalysis. Zn(2+) is bound by residues cysteine 200 and cysteine 203. The interaction with DNA stretch occupies residues 209-212 (RHFT). 2 residues coordinate Zn(2+): histidine 217 and glutamate 221.

As to quaternary structure, monomer.

The protein resides in the nucleus. It localises to the cytoplasm. The catalysed reaction is a 5'-end adenosine-5'-diphospho-5'-2'-deoxyribonucleoside-DNA + H2O = a 5'-end 5'-phospho-2'-deoxyribonucleoside-DNA + AMP + 2 H(+). The enzyme catalyses a 5'-end adenosine-5'-diphospho-5'-ribonucleoside-2'-deoxyribonucleotide-DNA + H2O = a 5'-end 5'-phospho-ribonucleoside-2'-deoxyribonucleotide-DNA + AMP + 2 H(+). It carries out the reaction a 3'-end 2'-deoxyribonucleotide-3'-diphospho-5'-guanosine-DNA + H2O = a 3'-end 2'-deoxyribonucleotide 3'-phosphate-DNA + GMP + 2 H(+). DNA-binding protein involved in single-strand DNA break repair, double-strand DNA break repair and base excision repair. Resolves abortive DNA ligation intermediates formed either at base excision sites, or when DNA ligases attempt to repair non-ligatable breaks induced by reactive oxygen species. Catalyzes the release of adenylate groups covalently linked to 5'-phosphate termini, resulting in the production of 5'-phosphate termini that can be efficiently rejoined. Likewise, catalyzes the release of 3'-linked guanosine (DNAppG) and inosine (DNAppI) from DNA, but has higher specific activity with 5'-linked adenosine (AppDNA). This is Aprataxin-like protein (hnt3) from Schizosaccharomyces pombe (strain 972 / ATCC 24843) (Fission yeast).